Here is a 242-residue protein sequence, read N- to C-terminus: Uridylate kinase (242 aa).

16–19 lines the ATP pocket; it reads KVSG. Glycine 58 lines the UMP pocket. 2 residues coordinate ATP: glycine 59 and arginine 63. Residues aspartate 78 and 139 to 146 contribute to the UMP site; that span reads TGNPFCTT. ATP-binding residues include threonine 166, glutamine 167, tyrosine 172, and aspartate 175.

This sequence belongs to the UMP kinase family. Homohexamer.

Its subcellular location is the cytoplasm. The catalysed reaction is UMP + ATP = UDP + ADP. It functions in the pathway pyrimidine metabolism; CTP biosynthesis via de novo pathway; UDP from UMP (UMPK route): step 1/1. With respect to regulation, inhibited by UTP. In terms of biological role, catalyzes the reversible phosphorylation of UMP to UDP. The polypeptide is Uridylate kinase (Rickettsia massiliae (strain Mtu5)).